The primary structure comprises 1002 residues: Vacuolar protein sorting-associated protein 18 homolog (1002 aa).

Phosphoserine is present on S344. The stretch at 650-804 is one CHCR repeat; it reads LMAQGSRLEV…DIKGTNDVKK (155 aa). A coiled-coil region spans residues 827–880; that stretch reads FEKIDNFKEAICDALRDYNQRIQELQREMAETTEQTDRVTAELQQLRQHSLTVE. Residues 885–924 form an RING-type; degenerate zinc finger; that stretch reads CEICEMMLLVKPFFIFICGHKFHSDCLEKHVVPLLTKEQC.

This sequence belongs to the VPS18 family. As to quaternary structure, component of the class C core vacuole/endosome tethering (CORVET) complex composed of at least Vps8, dor/Vps18, car/Vps33A and Vps16A; unlike in other species, Vps11 is not part of the Drosophila complex. Due to the reduced number of components the Drosophila CORVET complex is often referred to as the miniCORVET complex. Interacts with car/Vps33A. Interacts with ema. Component of the homotypic fusion and vacuole protein sorting (HOPS) complex, composed of Vps16A, car/Vps33A, dor/Vps18, Vps39, Vps11 and lt/Vps41. The tethering complex core made up of Vps16A, car/Vps33A and dor/Vps18 and shared by both HOPS and CORVET, preferentially associates with CORVET-specific Vps8 over HOPS-specific lt/Vps41. Interacts with Syx17 (via SNARE domain); the interaction may involve multiple components of the HOPS complex and may promote assembly of the Syx17-Snap29-Vamp7 trans-SNARE complex.

The protein resides in the early endosome. It is found in the late endosome membrane. It localises to the lysosome membrane. The protein localises to the cytoplasmic vesicle. Its subcellular location is the autophagosome. Core component of the class C core vacuole/endosome tethering (CORVET) and the homotypic fusion and vacuole protein sorting (HOPS) tethering complexes involved in endo-lysosomal vesicle trafficking and lysosome biogenesis. The CORVET complex facilitates docking and fusion of endosomal vesicles during endosome maturation, acts upstream of HOPS, but is not involved in autophagic flux. The CORVET complex may cooperate with the early endosomal tether Rbsn-5 to mediate endosomal fusion. The HOPS complex facilitates docking and fusion of lysosomes with late endosomes and several other types of vesicles. The HOPS complex is also involved in autophagy and crinophagy (the elimination of unused secretory granules through their fusion with lysosomes). The HOPS complex mediates autophagocitic flux, probably by binding autophagosome-associated Syx17/syntaxin 17, promoting assembly of the trans-SNARE complex and instigating autophagosome-lysosome fusion. Independent of Syx17/syntaxin 17, HOPS is involved in biosynthetic transport to lysosomes and lysosome-related organelles such as eye-pigment granules. Required for endocytic degradation of boss/bride of sevenless and N/Notch in developing ommatidia. Required for autophagocytosis-dependent remodeling of myofibrils and transverse-tubules (T-tubules) during metamorphosis. In larval neuromuscular junctions, essential for endosomal sorting that traffics old or dysfunctional synaptic vesicle proteins through a degradative endolysosomal route. Required to maintain normal levels of rush, which functions in endosome formation and trafficking. This Drosophila melanogaster (Fruit fly) protein is Vacuolar protein sorting-associated protein 18 homolog.